The sequence spans 427 residues: Glutamate-1-semialdehyde 2,1-aminomutase (427 aa).

Residue K265 is modified to N6-(pyridoxal phosphate)lysine.

This sequence belongs to the class-III pyridoxal-phosphate-dependent aminotransferase family. HemL subfamily. In terms of assembly, homodimer. Requires pyridoxal 5'-phosphate as cofactor.

It is found in the cytoplasm. The catalysed reaction is (S)-4-amino-5-oxopentanoate = 5-aminolevulinate. The protein operates within porphyrin-containing compound metabolism; protoporphyrin-IX biosynthesis; 5-aminolevulinate from L-glutamyl-tRNA(Glu): step 2/2. This chain is Glutamate-1-semialdehyde 2,1-aminomutase, found in Burkholderia ambifaria (strain MC40-6).